A 298-amino-acid chain; its full sequence is tRNA pseudouridine synthase B (298 aa).

Catalysis depends on Asp-44, which acts as the Nucleophile.

The protein belongs to the pseudouridine synthase TruB family. Type 1 subfamily.

It catalyses the reaction uridine(55) in tRNA = pseudouridine(55) in tRNA. In terms of biological role, responsible for synthesis of pseudouridine from uracil-55 in the psi GC loop of transfer RNAs. The protein is tRNA pseudouridine synthase B of Mycobacteroides abscessus (strain ATCC 19977 / DSM 44196 / CCUG 20993 / CIP 104536 / JCM 13569 / NCTC 13031 / TMC 1543 / L948) (Mycobacterium abscessus).